A 58-amino-acid chain; its full sequence is Amyloid-beta precursor protein (58 aa).

Topologically, residues 1–34 (ISEVKMDAEFRHDSGYEVHHQKLVFFAEDVGSNK) are extracellular. Cu(2+)-binding residues include H12, Y16, H19, and H20. 4 residues coordinate Zn(2+): H12, Y16, H19, and H20. Residues 35 to 58 (GAIIGLMVGGVVIATVIVITLVML) traverse the membrane as a helical segment.

Belongs to the APP family. As to quaternary structure, binds, via its C-terminus, to the PID domain of several cytoplasmic proteins, including APBB family members, the APBA family, MAPK8IP1, SHC1 and NUMB and DAB1. Binding to DAB1 inhibits its serine phosphorylation. Interacts (via NPXY motif) with DAB2 (via PID domain); the interaction is impaired by tyrosine phosphorylation of the NPXY motif. Also interacts with GPCR-like protein BPP, APPBP1, IB1, KNS2 (via its TPR domains), APPBP2 (via BaSS) and DDB1. In vitro, it binds MAPT via the MT-binding domains. Associates with microtubules in the presence of ATP and in a kinesin-dependent manner. Interacts, through a C-terminal domain, with GNAO1. Interacts with CPEB1, ANKS1B and AGER. Interacts with ITM2B. Interacts with ITM2C. Interacts with IDE. Can form homodimers; dimerization is enhanced in the presence of Cu(2+) ions. Can form homodimers; this is promoted by heparin binding. Interacts with SORL1 (via N-terminal ectodomain); this interaction retains APP in the trans-Golgi network and reduces processing into soluble APP-alpha and amyloid-beta peptides. Interacts with PLD3. Interacts with VDAC1. Interacts with NSG1; could regulate APP processing. Amyloid-beta protein 42 interacts with FPR2. Interacts with LRRK2. Interacts (via cytoplasmic domain) with KIF5B. Interacts (via C-terminus) with APBB2/FE65L1 (via C-terminus). Interacts (via intracellular domain) with APBB3. In terms of processing, proteolytically processed under normal cellular conditions. Cleavage either by alpha-secretase, beta-secretase or theta-secretase leads to generation and extracellular release of soluble APP peptides, S-APP-alpha and S-APP-beta, and the retention of corresponding membrane-anchored C-terminal fragments, C80, C83 and C99. Subsequent processing of C80 and C83 by gamma-secretase yields P3 peptides. This is the major secretory pathway and is non-amyloidogenic. Alternatively, presenilin/nicastrin-mediated gamma-secretase processing of C99 releases the amyloid-beta proteins, amyloid-beta protein 40 and amyloid-beta protein 42, major components of amyloid plaques, and the cytotoxic C-terminal fragments, gamma-CTF(50), gamma-CTF(57) and gamma-CTF(59). PSEN1 cleavage is more efficient with C83 than with C99 as substrate (in vitro). Amyloid-beta protein 40 and Amyloid-beta protein 42 are cleaved by ACE. Many other minor amyloid-beta peptides, amyloid-beta 1-X peptides, are found in cerebral spinal fluid (CSF) including the amyloid-beta X-15 peptides, produced from the cleavage by alpha-secretase.

The protein localises to the cell membrane. Its subcellular location is the membrane. The protein resides in the perikaryon. It is found in the cell projection. It localises to the growth cone. The protein localises to the clathrin-coated pit. Its subcellular location is the early endosome. The protein resides in the cytoplasmic vesicle. It is found in the secreted. It localises to the cell surface. The protein localises to the nucleus. Its subcellular location is the cytoplasm. Its function is as follows. Functions as a cell surface receptor and performs physiological functions on the surface of neurons relevant to neurite growth, neuronal adhesion and axonogenesis. Interaction between APP molecules on neighboring cells promotes synaptogenesis. Involved in cell mobility and transcription regulation through protein-protein interactions. Can promote transcription activation through binding to APBB1-KAT5 and inhibit Notch signaling through interaction with Numb. Couples to apoptosis-inducing pathways such as those mediated by G(o) and JIP. Inhibits G(o)-alpha ATPase activity. Acts as a kinesin I membrane receptor, mediating the axonal transport of beta-secretase and presenilin 1. By acting as a kinesin I membrane receptor, plays a role in axonal anterograde transport of cargo towards synapses in axons. May be involved in copper homeostasis/oxidative stress through copper ion reduction. In vitro, copper-metallated APP induces neuronal death directly or is potentiated through Cu(2+)-mediated low-density lipoprotein oxidation. Can regulate neurite outgrowth through binding to components of the extracellular matrix such as heparin and collagen I and IV. Induces a AGER-dependent pathway that involves activation of p38 MAPK, resulting in internalization of amyloid-beta peptide and mitochondrial dysfunction in cultured cortical neurons. Provides Cu(2+) ions for GPC1 which are required for release of nitric oxide (NO) and subsequent degradation of the heparan sulfate chains on GPC1. This Canis lupus familiaris (Dog) protein is Amyloid-beta precursor protein (APP).